Reading from the N-terminus, the 333-residue chain is Taste receptor type 2 member 38 (333 aa).

The Extracellular portion of the chain corresponds to 1–17 (MLTLTRIRTVSYEVRST). A helical transmembrane segment spans residues 18 to 38 (FLFISVLEFAVGFLTNAFVFL). Residues 39–55 (VNFWDVVKRQPLSNSDC) are Cytoplasmic-facing. A helical transmembrane segment spans residues 56-76 (VLLCLSISRLFLHGLLFLSAI). Topologically, residues 77–94 (QLTHFQKLSEPLNHSYQA) are extracellular. A helical transmembrane segment spans residues 95-115 (IIMLWMIANQANLWLAACLSL). At 116–142 (LYCSKLIRFSHTFLICLASWVSRKISQ) the chain is on the cytoplasmic side. A helical transmembrane segment spans residues 143–163 (MLLGIILCSCICTVLCVWCFF). Residues 164-190 (SRPHFTVTTVLFMNNNTRLNWQIKDLN) lie on the Extracellular side of the membrane. Asn-178 is a glycosylation site (N-linked (GlcNAc...) asparagine). Residues 191–211 (LFYSFLFCYLWSVPPFLLFLV) form a helical membrane-spanning segment. Residues 212 to 251 (SSGMLTVSLGRHMRTMKVYIRDSRDPSLEAHIKALKSLVS) lie on the Cytoplasmic side of the membrane. A helical transmembrane segment spans residues 252–272 (FFCFFVISSCAAFISVPLLIL). Topologically, residues 273–276 (WRDK) are extracellular. Residues 277 to 297 (IGVMVCVGIMAACPSGHAAVL) traverse the membrane as a helical segment. Topologically, residues 298–333 (ISGNAKLRRAVTTILLWAQSSLKVRADHKADSRTPC) are cytoplasmic.

It belongs to the G-protein coupled receptor T2R family.

It localises to the membrane. Receptor that may play a role in the perception of bitterness and is gustducin-linked. May play a role in sensing the chemical composition of the gastrointestinal content. The activity of this receptor may stimulate alpha gustducin, mediate PLC-beta-2 activation and lead to the gating of TRPM5. This chain is Taste receptor type 2 member 38 (TAS2R38), found in Gorilla gorilla gorilla (Western lowland gorilla).